Consider the following 286-residue polypeptide: Prohibitin-6, mitochondrial (286 aa).

The Mitochondrial matrix segment spans residues 1–12 (MNFKNVKVPKGP). The chain crosses the membrane as a helical; Signal-anchor for type II membrane protein span at residues 13 to 35 (GGGVIAAVVIGGLSLYGATHTLY). Topologically, residues 36–286 (NVDGGHRAIV…AMDLDVKPKK (251 aa)) are mitochondrial intermembrane.

Belongs to the prohibitin family. As to quaternary structure, component of a prohibitin multimeric complex in mitochondrial membranes. Mostly expressed in proliferative tissues, including vasculature, shoot and root apical tissues.

It localises to the mitochondrion inner membrane. In terms of biological role, prohibitin probably acts as a holdase/unfoldase for the stabilization of newly synthesized mitochondrial proteins. The chain is Prohibitin-6, mitochondrial (PHB6) from Arabidopsis thaliana (Mouse-ear cress).